The chain runs to 208 residues: GATA transcription factor 20 (208 aa).

The GATA-type zinc finger occupies 94–119 (CASCDTTSTPLWRNGPKGPKSLCNAC).

This sequence belongs to the type IV zinc-finger family. Class B subfamily.

The protein localises to the nucleus. Functionally, transcriptional regulator that specifically binds 5'-GATA-3' or 5'-GAT-3' motifs within gene promoters. This is GATA transcription factor 20 from Arabidopsis thaliana (Mouse-ear cress).